The following is a 138-amino-acid chain: Phospholipase A2 EC1 (138 aa).

A signal peptide spans 1 to 16; that stretch reads MRTLWIVAVWLMSVEG. Cystine bridges form between C42–C131, C44–C60, C59–C111, C65–C138, C66–C104, C73–C97, and C91–C102. Ca(2+) contacts are provided by Y43, G45, and G47. The active site involves H63. D64 lines the Ca(2+) pocket. D105 is an active-site residue.

Belongs to the phospholipase A2 family. Group II subfamily. Ca(2+) serves as cofactor.

It localises to the secreted. It catalyses the reaction a 1,2-diacyl-sn-glycero-3-phosphocholine + H2O = a 1-acyl-sn-glycero-3-phosphocholine + a fatty acid + H(+). This Echis coloratus (Carpet viper) protein is Phospholipase A2 EC1.